A 474-amino-acid chain; its full sequence is Glutamate--tRNA ligase (474 aa).

Positions 9–19 (PSPTGYLHVGG) match the 'HIGH' region motif. The short motif at 240-244 (KLSKR) is the 'KMSKS' region element. Position 243 (lysine 243) interacts with ATP.

This sequence belongs to the class-I aminoacyl-tRNA synthetase family. Glutamate--tRNA ligase type 1 subfamily. In terms of assembly, monomer.

It localises to the cytoplasm. The catalysed reaction is tRNA(Glu) + L-glutamate + ATP = L-glutamyl-tRNA(Glu) + AMP + diphosphate. Functionally, catalyzes the attachment of glutamate to tRNA(Glu) in a two-step reaction: glutamate is first activated by ATP to form Glu-AMP and then transferred to the acceptor end of tRNA(Glu). This Vibrio vulnificus (strain CMCP6) protein is Glutamate--tRNA ligase.